A 175-amino-acid polypeptide reads, in one-letter code: MSIDDLKSKIPDFAKDVRLNLSSMASNETLTPQQKYGLFVACGIASRNADVRKALVAEAAGKVDASVIQAAKAAASIMGMNNVYYRFVHLASNKDYRTMPARLRMNVISNPGVDKVDFELWSLAVSAINGCGMCIDAHEDVLRKANVTAEAIQAAVRFASIIQSAAIALEAADTE.

The active-site Proton donor is the Cys-131. Cys-131 and Cys-134 are joined by a disulfide. Residue Cys-134 is the Cysteine sulfenic acid (-SOH) intermediate of the active site.

This sequence belongs to the AhpD family.

The enzyme catalyses N(6)-[(R)-dihydrolipoyl]-L-lysyl-[lipoyl-carrier protein] + a hydroperoxide = N(6)-[(R)-lipoyl]-L-lysyl-[lipoyl-carrier protein] + an alcohol + H2O. Functionally, antioxidant protein with alkyl hydroperoxidase activity. Required for the reduction of the AhpC active site cysteine residues and for the regeneration of the AhpC enzyme activity. This is Alkyl hydroperoxide reductase AhpD from Brucella canis (strain ATCC 23365 / NCTC 10854 / RM-666).